The chain runs to 470 residues: Aspartyl aminopeptidase (470 aa).

His92 contacts Zn(2+). His166 is a substrate binding site. Zn(2+) is bound at residue Asp263. Glu299 serves as a coordination point for substrate. Zn(2+) contacts are provided by Glu300 and Asp343. Positions 343, 346, 371, and 378 each coordinate substrate. Residue His437 coordinates Zn(2+).

Belongs to the peptidase M18 family. As to quaternary structure, tetrahedron-shaped homododecamer built from six homodimers. It depends on Zn(2+) as a cofactor. As to expression, expressed in various cell types and tissues including the pharynx, neurons, body wall muscle, intestine and vulva.

The protein resides in the cytoplasm. It is found in the cytosol. It carries out the reaction Release of an N-terminal aspartate or glutamate from a peptide, with a preference for aspartate.. Functionally, aminopeptidase with specificity towards an acidic amino acid at the N-terminus. Plays a role in membrane trafficking and is specifically involved in the recycling and degradation of endocytic cargo. The polypeptide is Aspartyl aminopeptidase (Caenorhabditis elegans).